The sequence spans 72 residues: Large ribosomal subunit protein bL31 (72 aa).

Cys-16, Cys-18, Cys-37, and Cys-40 together coordinate Zn(2+).

The protein belongs to the bacterial ribosomal protein bL31 family. Type A subfamily. Part of the 50S ribosomal subunit. Requires Zn(2+) as cofactor.

In terms of biological role, binds the 23S rRNA. The polypeptide is Large ribosomal subunit protein bL31 (Buchnera aphidicola subsp. Acyrthosiphon pisum (strain APS) (Acyrthosiphon pisum symbiotic bacterium)).